The primary structure comprises 374 residues: Alcohol dehydrogenase 3, mitochondrial (374 aa).

A mitochondrion-targeting transit peptide spans 1–26 (MLRLTSARSIVSPLRKGAFGSIRTLA). Zn(2+)-binding residues include C70, H93, C124, C127, C130, C138, and C180. Residues 204 to 210 (GAAGGLG), D228, K233, 295 to 297 (VGL), and R367 contribute to the NAD(+) site.

Belongs to the zinc-containing alcohol dehydrogenase family. As to quaternary structure, homotetramer. It depends on Zn(2+) as a cofactor.

Its subcellular location is the mitochondrion matrix. The enzyme catalyses a primary alcohol + NAD(+) = an aldehyde + NADH + H(+). The catalysed reaction is a secondary alcohol + NAD(+) = a ketone + NADH + H(+). The chain is Alcohol dehydrogenase 3, mitochondrial (ADH3) from Kluyveromyces lactis (strain ATCC 8585 / CBS 2359 / DSM 70799 / NBRC 1267 / NRRL Y-1140 / WM37) (Yeast).